Here is a 487-residue protein sequence, read N- to C-terminus: Protein nucleotidyltransferase YdiU (487 aa).

The ATP site is built by Gly85, Gly87, Arg88, Lys108, Asp120, Gly121, Arg171, and Arg178. The active-site Proton acceptor is Asp247. 2 residues coordinate Mg(2+): Asn248 and Asp257. ATP is bound at residue Asp257.

The protein belongs to the SELO family. Mg(2+) serves as cofactor. It depends on Mn(2+) as a cofactor.

The enzyme catalyses L-seryl-[protein] + ATP = 3-O-(5'-adenylyl)-L-seryl-[protein] + diphosphate. It catalyses the reaction L-threonyl-[protein] + ATP = 3-O-(5'-adenylyl)-L-threonyl-[protein] + diphosphate. It carries out the reaction L-tyrosyl-[protein] + ATP = O-(5'-adenylyl)-L-tyrosyl-[protein] + diphosphate. The catalysed reaction is L-histidyl-[protein] + UTP = N(tele)-(5'-uridylyl)-L-histidyl-[protein] + diphosphate. The enzyme catalyses L-seryl-[protein] + UTP = O-(5'-uridylyl)-L-seryl-[protein] + diphosphate. It catalyses the reaction L-tyrosyl-[protein] + UTP = O-(5'-uridylyl)-L-tyrosyl-[protein] + diphosphate. Functionally, nucleotidyltransferase involved in the post-translational modification of proteins. It can catalyze the addition of adenosine monophosphate (AMP) or uridine monophosphate (UMP) to a protein, resulting in modifications known as AMPylation and UMPylation. The protein is Protein nucleotidyltransferase YdiU of Agrobacterium fabrum (strain C58 / ATCC 33970) (Agrobacterium tumefaciens (strain C58)).